The primary structure comprises 205 residues: NADH dehydrogenase (205 aa).

Residues 17–21 (RRSIR), Q73, 158–159 (LG), and R195 each bind FMN.

This sequence belongs to the nitroreductase family. Homodimer. FMN serves as cofactor.

It carries out the reaction a ubiquinone + NADH + 5 H(+)(in) = a ubiquinol + NAD(+) + 4 H(+)(out). In terms of biological role, can oxidize either NADH or NADPH with a preference for NADH. Can catalyze electron transfer from NADH to various electron acceptors which include, in addition to molecular oxygen, cytochrome c, 2,6 dichlorphenolindophenol, methylene blue, ferricyanide or P-nitroblue tetrazolium. This is NADH dehydrogenase (nox) from Thermus thermophilus (strain ATCC 27634 / DSM 579 / HB8).